Reading from the N-terminus, the 114-residue chain is Reprimo-like protein (114 aa).

A helical membrane pass occupies residues 61–81 (VVQIAVLCVLSLTVMFGIFFL).

This sequence belongs to the reprimo family.

The protein resides in the membrane. This Danio rerio (Zebrafish) protein is Reprimo-like protein (rprml).